Here is a 401-residue protein sequence, read N- to C-terminus: Mannonate dehydratase (401 aa).

Belongs to the mannonate dehydratase family. The cofactor is Fe(2+). It depends on Mn(2+) as a cofactor.

The catalysed reaction is D-mannonate = 2-dehydro-3-deoxy-D-gluconate + H2O. Its pathway is carbohydrate metabolism; pentose and glucuronate interconversion. Its function is as follows. Catalyzes the dehydration of D-mannonate. This chain is Mannonate dehydratase, found in Brucella melitensis biotype 2 (strain ATCC 23457).